The sequence spans 894 residues: Leucine--tRNA ligase, mitochondrial (894 aa).

Residues Met-1 to Phe-9 constitute a mitochondrion transit peptide. A 'HIGH' region motif is present at residues Pro-56–His-66. The 'KMSKS' region motif lies at Lys-646–Ser-650. Residue Lys-649 participates in ATP binding.

The protein belongs to the class-I aminoacyl-tRNA synthetase family.

The protein localises to the mitochondrion matrix. It catalyses the reaction tRNA(Leu) + L-leucine + ATP = L-leucyl-tRNA(Leu) + AMP + diphosphate. Catalyzes the attachment of leucine to tRNA(Leu) in the mitochondrion. The protein is Leucine--tRNA ligase, mitochondrial (NAM2) of Saccharomyces cerevisiae (strain ATCC 204508 / S288c) (Baker's yeast).